Here is a 156-residue protein sequence, read N- to C-terminus: Transcriptional repressor NrdR (156 aa).

The segment at 3–34 is a zinc-finger region; sequence CPFCQHDDTQVLDTRISEEGDSIRRRRRCVSC. Residues 49 to 139 form the ATP-cone domain; it reads PVIVKKNGSR…VYKSFEDVAE (91 aa).

Belongs to the NrdR family. Requires Zn(2+) as cofactor.

Functionally, negatively regulates transcription of bacterial ribonucleotide reductase nrd genes and operons by binding to NrdR-boxes. The polypeptide is Transcriptional repressor NrdR (Herminiimonas arsenicoxydans).